Consider the following 532-residue polypeptide: Fatty aldehyde dehydrogenase HFD1 (532 aa).

Residue S111 is modified to Phosphoserine. The chain crosses the membrane as a helical span at residues 134–152 (IIAPFNFPLLLAFAPLAAA). 214–219 (GSPRVG) lines the NAD(+) pocket. Catalysis depends on residues E236 and C273.

This sequence belongs to the aldehyde dehydrogenase family.

The protein localises to the lipid droplet. The protein resides in the mitochondrion outer membrane. Its subcellular location is the endosome membrane. It is found in the cytoplasmic granule membrane. The catalysed reaction is an aldehyde + NAD(+) + H2O = a carboxylate + NADH + 2 H(+). It carries out the reaction hexadecanoate + NADH + 2 H(+) = hexadecanal + NAD(+) + H2O. It catalyses the reaction 4-hydroxybenzaldehyde + NAD(+) + H2O = 4-hydroxybenzoate + NADH + 2 H(+). Catalyzes the oxidation of long-chain aliphatic aldehydes to fatty acids. Responsible for conversion of the sphingosine 1-phosphate (S1P) degradation product hexadecenal to hexadecenoic acid. Involved in coenzyme Q (CoQ) biosynthesis, catalyzing the last step in the tyrosine to 4-hydroxybenzoate (4-HB) pathway. Oxidizes 4-hydroxybenzaldehyde (4-Hbz) to 4-HB, the aromatic precursor for coenzyme Q. This Saccharomyces cerevisiae (strain ATCC 204508 / S288c) (Baker's yeast) protein is Fatty aldehyde dehydrogenase HFD1 (HFD1).